A 292-amino-acid chain; its full sequence is Protease HtpX (292 aa).

Helical transmembrane passes span 5-25 (VVLF…VMSV) and 34-54 (SGLL…SLLL). H140 contributes to the Zn(2+) binding site. The active site involves E141. Zn(2+) is bound at residue H144. 2 consecutive transmembrane segments (helical) span residues 155–175 (LLQG…GGII) and 193–213 (IIVF…AMWF). E218 serves as a coordination point for Zn(2+).

Belongs to the peptidase M48B family. Zn(2+) is required as a cofactor.

The protein resides in the cell inner membrane. This chain is Protease HtpX, found in Xanthomonas campestris pv. campestris (strain B100).